A 746-amino-acid chain; its full sequence is MGDVLSTHLDDARRQHIAEKTGKILTEFLQFYEDQYGVALFNSMRHEIEGTGLPQAQLLWRKVPLDERIVFSGNLFQHQEDSKKWRNRFSLVPHNYGLVLYENKAAYERQVPPRAVINSAGYKILTSVDQYLELIGNSLPGTTAKSGSAPILKCPTQFPLILWHPYARHYYFCMMTEAEQDKWQAVLQDCIRHCNNGIPEDSKVEGPAFTDAIRMYRQSKELYGTWEMLCGNEVQILSNLVMEELGPELKAELGPRLKGKPQERQRQWIQISDAVYHMVYEQAKARFEEVLSKVQQVQPAMQAVIRTDMDQIITSKEHLASKIRAFILPKAEVCVRNHVQPYIPSILEALMVPTSQGFTEVRDVFFKEVTDMNLNVINEGGIDKLGEYMEKLSRLAYHPLKMQSCYEKMESLRLDGLQQRFDVSSTSVFKQRAQIHMREQMDNAVYTFETLLHQELGKGPTKEELCKSIQRVLERVLKKYDYDSSSVRKRFFREALLQISIPFLLKKLAPTCKSELPRFQELIFEDFARFILVENTYEEVVLQTVMKDILQAVKEAAVQRKHNLYRDSMVMHNSDPNLHLLAEGAPIDWGEEYSNSGGGGSPSPSTPESATLSEKRRRAKQVVSVVQDEEVGLPFEASPESPPPASPDGVTEIRGLLAQGLRPESPPPAGPLLNGAPAGESPQPKAAPEASSPPASPLQHLLPGKAVDLGPPKPSDQETGEQVSSPSSHPALHTTTEDSAGVQTEF.

The N-myristoyl glycine moiety is linked to residue Gly-2. In terms of domain architecture, PH spans 68-192 (RIVFSGNLFQ…WQAVLQDCIR (125 aa)). 4 positions are modified to phosphoserine: Ser-568, Ser-574, Ser-601, and Ser-603. The disordered stretch occupies residues 590–746 (GEEYSNSGGG…EDSAGVQTEF (157 aa)). The residue at position 606 (Thr-606) is a Phosphothreonine. Phosphoserine occurs at positions 609, 624, 638, 641, 646, 665, 681, 692, and 696. Residues 671 to 693 (PLLNGAPAGESPQPKAAPEASSP) show a composition bias toward low complexity. Over residues 720-746 (GEQVSSPSSHPALHTTTEDSAGVQTEF) the composition is skewed to polar residues.

Belongs to the Niban family. In terms of processing, phosphorylated at Ser-641, Ser-646, Ser-692 and Ser-696 by the BRAF/MKK/ERK signaling cascade. In melanoma cells, the C-terminal phosphorylation may prevent targeting to the plasma membrane. Post-translationally, as apoptosis proceeds, degraded via an proteasome-independent pathway, probably by caspases.

It is found in the cytoplasm. It localises to the cytosol. The protein resides in the cell junction. The protein localises to the adherens junction. Its subcellular location is the membrane. May play a role in apoptosis suppression. May promote melanoma cell invasion in vitro. This chain is Protein Niban 2, found in Homo sapiens (Human).